A 329-amino-acid chain; its full sequence is DNA-directed RNA polymerase subunit alpha (329 aa).

Residues 1–234 (MQGSVTEFLK…EQLDAFVELR (234 aa)) are alpha N-terminal domain (alpha-NTD). An alpha C-terminal domain (alpha-CTD) region spans residues 248-329 (FDPILLRPVD…WPPASLIDND (82 aa)).

Belongs to the RNA polymerase alpha chain family. In terms of assembly, homodimer. The RNAP catalytic core consists of 2 alpha, 1 beta, 1 beta' and 1 omega subunit. When a sigma factor is associated with the core the holoenzyme is formed, which can initiate transcription.

It catalyses the reaction RNA(n) + a ribonucleoside 5'-triphosphate = RNA(n+1) + diphosphate. Functionally, DNA-dependent RNA polymerase catalyzes the transcription of DNA into RNA using the four ribonucleoside triphosphates as substrates. The sequence is that of DNA-directed RNA polymerase subunit alpha from Idiomarina loihiensis (strain ATCC BAA-735 / DSM 15497 / L2-TR).